The primary structure comprises 634 residues: Ankyrin repeat protein OPG025 (634 aa).

ANK repeat units lie at residues Asp-36–Ile-69, Asn-70–Ser-100, Asn-103–Ser-134, Met-175–Tyr-211, Ile-307–Arg-337, and His-412–Ile-441.

It belongs to the orthopoxvirus OPG025 family. As to quaternary structure, interacts with components of host SCF complex CUL1 and SKP1 and components of the cullin deneddylation/COP9 signalosome complex subunits COPS7A and COPS7B.

Plays a role in the inhibition of host immune repsonse by counteracting the action of interferons on early events in the viral replication cycle. The protein is Ankyrin repeat protein OPG025 (OPG035) of Vaccinia virus (strain Western Reserve) (VACV).